The following is a 261-amino-acid chain: Probable membrane transporter protein PD_1894 (261 aa).

Helical transmembrane passes span Leu6 to Gly26, His45 to Ile64, Val78 to Ile98, Asp99 to Leu119, Ala150 to Ala170, Thr175 to Leu195, Trp205 to Leu225, and Val239 to Leu259.

The protein belongs to the 4-toluene sulfonate uptake permease (TSUP) (TC 2.A.102) family.

It is found in the cell membrane. This chain is Probable membrane transporter protein PD_1894, found in Xylella fastidiosa (strain Temecula1 / ATCC 700964).